Here is a 100-residue protein sequence, read N- to C-terminus: NADH-quinone oxidoreductase subunit K (100 aa).

3 helical membrane passes run 4-24 (TSYYVLLSAILFTIGVLGVLL), 29-49 (IVIFMSVELMLNAANLALVAF), and 61-81 (IVFFVITVAAAEVAVGLALLV).

Belongs to the complex I subunit 4L family. NDH-1 is composed of 14 different subunits. Subunits NuoA, H, J, K, L, M, N constitute the membrane sector of the complex.

It is found in the cell membrane. The enzyme catalyses a quinone + NADH + 5 H(+)(in) = a quinol + NAD(+) + 4 H(+)(out). Functionally, NDH-1 shuttles electrons from NADH, via FMN and iron-sulfur (Fe-S) centers, to quinones in the respiratory chain. The immediate electron acceptor for the enzyme in this species is believed to be ubiquinone. Couples the redox reaction to proton translocation (for every two electrons transferred, four hydrogen ions are translocated across the cytoplasmic membrane), and thus conserves the redox energy in a proton gradient. In Chloroflexus aggregans (strain MD-66 / DSM 9485), this protein is NADH-quinone oxidoreductase subunit K.